The sequence spans 893 residues: MDKQSTFQDPKEKHRIQRDVKLSRPRKRFSFLDYVVVIFLTVVAFCVRAQRLMNPAKVVFEELRYYNYAVDYVNNKLLMDVYPPLGKLLFSLVAALTGNKYELNTLDEPGQQYPFTDVAYSMRLFTCLLGSLLVPLMYGTVYFPTKSKTAASLAALFVIFDNGLITMSRYIMIEIPALYFMSLTAFYWSVYEAQQKRPFSLRWHTSLLSTGVALGLALSTKLSAMFTFGWLLILAAFHLWNLLGDLSVPMYRIVKHLFSYIFYLIGVPITVYLAVFAVHSHIAYKASVADAFLPPEHRHALAGNRFDDQFADVAYGSLVTIRNAIPEHGYLHSSELLYPEGTEQQIISLVDEPNQNALWIIEHEHSQDNNRSNIELLKDGSVVRLRHVMTGRALHSHEHKPIVSNNDWQLEASAYGGFGFEGDANDLFRIQILEKKSKHATSNGTVETLNTKFRLIHVFANCELMSSHRRFPDWGDYQREVTCCRNCVERSTTWFIESNYHDGLPSDSRKITYRKPGFLESFVEHNKLMWLKDRKMGDGHVYESSALTWPLLLGPLRFFYEQHLQVFFMGNPFVWYSVISLVAFFVIVQIFCLARWNLGYNDFGPSAFHYNYNIGKFVVAWLLHWAPYILETDRVFLYHYLPALYFGIAALGVSWSFLGNAVFGNRTAYKALSVIIMALMFLVYRLYSPFTYMTTLTKSSCRALELKGSWNFHCNTYLDNLSDYKFSSDAGETYFEKAAPHPFVYSEDTAKKSEGDTPLNKNLNDYYPSWDQRVEAGYKLAAQQKAEQEAREAAEKAASEAAERSSSEAAASSSSESVAAASVEAERLAMEADEFNGASETVDGASVEAERSAMEAAALNNAAESTEVVGSSPESVASEQEENVAESAQARVE.

Transmembrane regions (helical) follow at residues 29-49, 77-97, 124-144, 147-167, 170-190, 224-244, and 258-278; these read FSFLDYVVVIFLTVVAFCVRA, LLMDVYPPLGKLLFSLVAALT, LFTCLLGSLLVPLMYGTVYFP, SKTAASLAALFVIFDNGLITM, YIMIEIPALYFMSLTAFYWSV, AMFTFGWLLILAAFHLWNLLG, and FSYIFYLIGVPITVYLAVFAV. The MIR 1 domain maps to 310-364; it reads FADVAYGSLVTIRNAIPEHGYLHSSELLYPEGTEQQIISLVDEPNQNALWIIEHE. Residue Asn-370 is glycosylated (N-linked (GlcNAc...) asparagine). MIR domains lie at 374 to 433 and 443 to 499; these read IELL…IQIL and NGTV…IESN. Asn-443 carries an N-linked (GlcNAc...) asparagine glycan. Thr-451 is modified (phosphothreonine). 3 helical membrane passes run 573-593, 610-630, and 643-663; these read FVWYSVISLVAFFVIVQIFCL, YNYNIGKFVVAWLLHWAPYIL, and ALYFGIAALGVSWSFLGNAVF. A glycan (N-linked (GlcNAc...) asparagine) is linked at Asn-665. The chain crosses the membrane as a helical span at residues 671-691; sequence ALSVIIMALMFLVYRLYSPFT. A glycan (N-linked (GlcNAc...) asparagine) is linked at Asn-720. The interval 785-893 is disordered; that stretch reads KAEQEAREAA…VAESAQARVE (109 aa). Over residues 786–806 the composition is skewed to basic and acidic residues; that stretch reads AEQEAREAAEKAASEAAERSS. Composition is skewed to low complexity over residues 807-823 and 854-864; these read SEAAASSSSESVAAASV and MEAAALNNAAE. The segment covering 868–878 has biased composition (polar residues); it reads VVGSSPESVAS.

The protein belongs to the glycosyltransferase 39 family.

The protein localises to the endoplasmic reticulum membrane. It localises to the nucleus membrane. The catalysed reaction is a di-trans,poly-cis-dolichyl beta-D-mannosyl phosphate + L-seryl-[protein] = 3-O-(alpha-D-mannosyl)-L-seryl-[protein] + a di-trans,poly-cis-dolichyl phosphate + H(+). The enzyme catalyses a di-trans,poly-cis-dolichyl beta-D-mannosyl phosphate + L-threonyl-[protein] = 3-O-(alpha-D-mannosyl)-L-threonyl-[protein] + a di-trans,poly-cis-dolichyl phosphate + H(+). Its pathway is protein modification; protein glycosylation. Transfers mannose from Dol-P-mannose to Ser or Thr residues on proteins. Required for normal cell growth and septum formation. Shown to actively O-mannosylate wsc1. This chain is Dolichyl-phosphate-mannose--protein mannosyltransferase 1 (ogm1), found in Schizosaccharomyces pombe (strain 972 / ATCC 24843) (Fission yeast).